A 515-amino-acid chain; its full sequence is Protein nucleotidyltransferase YdiU (515 aa).

ATP contacts are provided by Gly101, Gly103, Arg104, Lys124, Asp136, Gly137, Arg194, and Arg201. The Proton acceptor role is filled by Asp269. Asn270 and Asp279 together coordinate Mg(2+). Asp279 contacts ATP.

This sequence belongs to the SELO family. The cofactor is Mg(2+). Requires Mn(2+) as cofactor.

The enzyme catalyses L-seryl-[protein] + ATP = 3-O-(5'-adenylyl)-L-seryl-[protein] + diphosphate. It carries out the reaction L-threonyl-[protein] + ATP = 3-O-(5'-adenylyl)-L-threonyl-[protein] + diphosphate. The catalysed reaction is L-tyrosyl-[protein] + ATP = O-(5'-adenylyl)-L-tyrosyl-[protein] + diphosphate. It catalyses the reaction L-histidyl-[protein] + UTP = N(tele)-(5'-uridylyl)-L-histidyl-[protein] + diphosphate. The enzyme catalyses L-seryl-[protein] + UTP = O-(5'-uridylyl)-L-seryl-[protein] + diphosphate. It carries out the reaction L-tyrosyl-[protein] + UTP = O-(5'-uridylyl)-L-tyrosyl-[protein] + diphosphate. Nucleotidyltransferase involved in the post-translational modification of proteins. It can catalyze the addition of adenosine monophosphate (AMP) or uridine monophosphate (UMP) to a protein, resulting in modifications known as AMPylation and UMPylation. This Cytophaga hutchinsonii (strain ATCC 33406 / DSM 1761 / CIP 103989 / NBRC 15051 / NCIMB 9469 / D465) protein is Protein nucleotidyltransferase YdiU.